Reading from the N-terminus, the 790-residue chain is Serine/threonine-protein kinase DCLK3 (790 aa).

The disordered stretch occupies residues 1–37 (MPAAPVLRPPPPPATPAPPAPSRPAPPIPGHRGPCDH). Positions 7–29 (LRPPPPPATPAPPAPSRPAPPIP) are enriched in pro residues. Positions 97–183 (RVVTVVKLGG…KEPLTLKSIQ (87 aa)) constitute a Doublecortin domain. Residues 201–218 (HSRVPSPRLRSRLPSKLL) show a composition bias toward low complexity. 2 disordered regions span residues 201-290 (HSRV…SGEK) and 315-506 (LQLG…KGII). Composition is skewed to basic and acidic residues over residues 332–345 (DLGRAQKRDSEKLV), 352–400 (RPSE…ESQD), 425–434 (IDMRREDRHT), and 457–496 (TRGEEKQAEHEKKPGGLGERRAPEKESKRKLEEKRPERPS). Residues 514 to 771 (YDIGGVIGDG…AEQVLQHPWI (258 aa)) form the Protein kinase domain. Residues 520-528 (IGDGNFATV) and K543 contribute to the ATP site. D635 functions as the Proton acceptor in the catalytic mechanism.

This sequence belongs to the protein kinase superfamily. CAMK Ser/Thr protein kinase family. CaMK subfamily. As to expression, highly expressed in brain and to a lower extent in liver and kidney.

The protein localises to the cytoplasm. The protein resides in the nucleus. The enzyme catalyses L-seryl-[protein] + ATP = O-phospho-L-seryl-[protein] + ADP + H(+). It carries out the reaction L-threonyl-[protein] + ATP = O-phospho-L-threonyl-[protein] + ADP + H(+). In Mus musculus (Mouse), this protein is Serine/threonine-protein kinase DCLK3 (Dclk3).